Consider the following 247-residue polypeptide: MSRLVLAIGNSRWHWGIFSRDQAPQFWDAIAPHQPFSRSDLATFLQAQDPAIVADTPIAIASVVPQQLALLPEDWPQRRLQLRDVPLTNCYPQLGLDRAIALYEAGCQAGWPVLMIDCGTAITINAGDAEGQFAGGAILPGVTLQLRSLAQGTAALPSVEISAEGDRWGMDTQSAIASGVIYGIAGALRGFIEDWRSHHPQRPIYFTGGDGELLAKLLTDLPDIRVEPHLLLHGIDRLAQAMMTDPD.

7–14 (AIGNSRWH) provides a ligand contact to ATP. Residues Y91 and 95–98 (GLDR) contribute to the substrate site. Residue D97 is the Proton acceptor of the active site. A K(+)-binding site is contributed by D117. An ATP-binding site is contributed by T120. T172 contacts substrate.

It belongs to the type III pantothenate kinase family. As to quaternary structure, homodimer. Requires NH4(+) as cofactor. It depends on K(+) as a cofactor.

It localises to the cytoplasm. The catalysed reaction is (R)-pantothenate + ATP = (R)-4'-phosphopantothenate + ADP + H(+). The protein operates within cofactor biosynthesis; coenzyme A biosynthesis; CoA from (R)-pantothenate: step 1/5. In terms of biological role, catalyzes the phosphorylation of pantothenate (Pan), the first step in CoA biosynthesis. In Synechococcus elongatus (strain ATCC 33912 / PCC 7942 / FACHB-805) (Anacystis nidulans R2), this protein is Type III pantothenate kinase.